A 487-amino-acid chain; its full sequence is Malonate-semialdehyde dehydrogenase (487 aa).

7 residues coordinate NAD(+): Ala-150, Phe-152, Lys-176, Glu-179, Arg-180, Ser-229, and Thr-251. The Nucleophile role is filled by Cys-284. NAD(+) is bound at residue Glu-382.

The protein belongs to the aldehyde dehydrogenase family. IolA subfamily. In terms of assembly, homotetramer.

It carries out the reaction 3-oxopropanoate + NAD(+) + CoA + H2O = hydrogencarbonate + acetyl-CoA + NADH + H(+). The catalysed reaction is 2-methyl-3-oxopropanoate + NAD(+) + CoA + H2O = propanoyl-CoA + hydrogencarbonate + NADH + H(+). It functions in the pathway polyol metabolism; myo-inositol degradation into acetyl-CoA; acetyl-CoA from myo-inositol: step 7/7. Functionally, catalyzes the oxidation of malonate semialdehyde (MSA) and methylmalonate semialdehyde (MMSA) into acetyl-CoA and propanoyl-CoA, respectively. Is involved in a myo-inositol catabolic pathway. Bicarbonate, and not CO2, is the end-product of the enzymatic reaction. The protein is Malonate-semialdehyde dehydrogenase of Bacillus subtilis subsp. natto.